Here is a 396-residue protein sequence, read N- to C-terminus: NADH-quinone oxidoreductase subunit D 1 (396 aa).

Belongs to the complex I 49 kDa subunit family. NDH-1 is composed of 14 different subunits. Subunits NuoB, C, D, E, F, and G constitute the peripheral sector of the complex.

The protein localises to the cell inner membrane. It carries out the reaction a quinone + NADH + 5 H(+)(in) = a quinol + NAD(+) + 4 H(+)(out). Functionally, NDH-1 shuttles electrons from NADH, via FMN and iron-sulfur (Fe-S) centers, to quinones in the respiratory chain. The immediate electron acceptor for the enzyme in this species is believed to be ubiquinone. Couples the redox reaction to proton translocation (for every two electrons transferred, four hydrogen ions are translocated across the cytoplasmic membrane), and thus conserves the redox energy in a proton gradient. This Sinorhizobium medicae (strain WSM419) (Ensifer medicae) protein is NADH-quinone oxidoreductase subunit D 1.